Reading from the N-terminus, the 834-residue chain is ATP-dependent DNA helicase fml1 (834 aa).

One can recognise a Helicase ATP-binding domain in the interval 80-248; it reads IVQKALFENV…NVIDSLHISR (169 aa). Residue 93 to 100 participates in ATP binding; sequence LPTGLGKT. The short motif at 196–199 is the DEAH box element; the sequence is DEAH. Positions 416-582 constitute a Helicase C-terminal domain; the sequence is HLERIVTEYF…GLSLSEKSYR (167 aa). Residues 650–690 form an interaction with MHF complex region; it reads EESPFEICPVTYSIEQEKKLEKYKRVCLRGLDIHRNRRLSQ. Residues 738–769 are disordered; it reads NSTDRDTKQPKMHDFRQPLHPNPMTTLKRKGQ. Residues 740 to 754 are compositionally biased toward basic and acidic residues; sequence TDRDTKQPKMHDFRQ.

The protein belongs to the DEAD box helicase family. DEAH subfamily. FANCM sub-subfamily.

The protein localises to the cytoplasm. It localises to the nucleus. Its subcellular location is the nucleolus. The catalysed reaction is ATP + H2O = ADP + phosphate + H(+). In terms of biological role, ATP-dependent DNA helicase involved in DNA damage repair by homologous recombination and in genome maintenance. Capable of unwinding D-loops. Plays a role in limiting crossover recombination during mitotic DNA double-strand break (DSB) repair. Component of a FANCM-MHF complex which promotes gene conversion at blocked replication forks, probably by reversal of the stalled fork. FANCM-MHF also promotes non-crossover recombination in meiotic cells. In Schizosaccharomyces pombe (strain 972 / ATCC 24843) (Fission yeast), this protein is ATP-dependent DNA helicase fml1.